The sequence spans 354 residues: Arginase-2, mitochondrial (354 aa).

The transit peptide at 1 to 22 (MFLRSSASRLLHGQIPCVLTRS) directs the protein to the mitochondrion. Mn(2+)-binding residues include His120, Asp143, His145, and Asp147. Substrate is bound by residues 145–149 (HADIN), 156–158 (SGN), and Glu202. Mn(2+)-binding residues include Asp251 and Asp253. Substrate contacts are provided by Thr265 and Glu296.

It belongs to the arginase family. In terms of assembly, homotrimer. Requires Mn(2+) as cofactor.

Its subcellular location is the mitochondrion. The catalysed reaction is L-arginine + H2O = urea + L-ornithine. It participates in nitrogen metabolism; urea cycle; L-ornithine and urea from L-arginine: step 1/1. In terms of biological role, may play a role in the regulation of extra-urea cycle arginine metabolism and also in down-regulation of nitric oxide synthesis. Extrahepatic arginase functions to regulate L-arginine bioavailability to nitric oxid synthase (NOS). Arginine metabolism is a critical regulator of innate and adaptive immune responses. Seems to be involved in negative regulation of the survival capacity of activated CD4(+) and CD8(+) T cells. May suppress inflammation-related signaling in asthmatic airway epithelium. May contribute to the immune evasion of H.pylori by restricting M1 macrophage activation and polyamine metabolism. May play a role in promoting prenatal immune suppression. Regulates RPS6KB1 signaling, which promotes endothelial cell senescence and inflammation and implicates NOS3/eNOS dysfunction. Can inhibit endothelial autophagy independently of its enzymatic activity implicating mTORC2 signaling. Involved in vascular smooth muscle cell senescence and apoptosis independently of its enzymatic activity. The chain is Arginase-2, mitochondrial (Arg2) from Mus musculus (Mouse).